Reading from the N-terminus, the 398-residue chain is Probable pectate lyase P56 (398 aa).

An N-terminal signal peptide occupies residues 1 to 27 (MEYSYRTKINVLFIVLILFVFAALGTA). The N-linked (GlcNAc...) asparagine glycan is linked to Asn-135. Ca(2+)-binding residues include Asp-192, Asp-217, and Asp-221. An N-linked (GlcNAc...) asparagine glycan is attached at Asn-228. Arg-273 is an active-site residue.

Belongs to the polysaccharide lyase 1 family. Ca(2+) serves as cofactor. Expressed in anthers and pollen.

The catalysed reaction is Eliminative cleavage of (1-&gt;4)-alpha-D-galacturonan to give oligosaccharides with 4-deoxy-alpha-D-galact-4-enuronosyl groups at their non-reducing ends.. Its pathway is glycan metabolism; pectin degradation; 2-dehydro-3-deoxy-D-gluconate from pectin: step 2/5. Functionally, might be needed during pollen development and tube growth. In Solanum lycopersicum (Tomato), this protein is Probable pectate lyase P56 (LAT56).